The chain runs to 472 residues: N-succinylglutamate 5-semialdehyde dehydrogenase 1 (472 aa).

209–214 serves as a coordination point for NAD(+); sequence GGVQAG. Catalysis depends on residues Glu-232 and Cys-266.

It belongs to the aldehyde dehydrogenase family. AstD subfamily.

The catalysed reaction is N-succinyl-L-glutamate 5-semialdehyde + NAD(+) + H2O = N-succinyl-L-glutamate + NADH + 2 H(+). The protein operates within amino-acid degradation; L-arginine degradation via AST pathway; L-glutamate and succinate from L-arginine: step 4/5. In terms of biological role, catalyzes the NAD-dependent reduction of succinylglutamate semialdehyde into succinylglutamate. In Caulobacter vibrioides (strain ATCC 19089 / CIP 103742 / CB 15) (Caulobacter crescentus), this protein is N-succinylglutamate 5-semialdehyde dehydrogenase 1.